Reading from the N-terminus, the 1465-residue chain is MSRIVKKGIVKIDQEQDEETFRENLAVQRNASAFFEKYDRTEVQELLTTTLVSWLAAKDDARSQLETPCGLMSQMNNAGFSTAILLTPVDPTALLDYREVHQILRELAIGIYCLNQIPSISLEANFDQSSSCQLPPAYYDTRVGQILIQIDYMLKALWHGIYMPKEKRARFSELWRTIMDIDLDGKPQTTKNVFSEFSSAGLVDITNDPDFNGIYDEDMNEDPTYEPNSPEEKAVFMKYAESIMMKLTFSTVQIQQHENIFIFETAYWLSNAIKYNQDYLDICTYQRLQKRLYLQKKVIQKHFEKKKEIRRGMGYLKLICFLIPFLLSLKRKMKVPYLNSLLPPFSDDKVKTERELPPFIYGRDFKCQNFDYKQHQYFHVHGGIEFDISTHPVESALDEFKKNVEKIWECASSASAEDAGYKEVYPIPVMELNGKSYYVIHFELEIFYQQLYKTQWWVAINETVNNLKVKRLPLTEDQLHEQFKKKFGLKKAMKCKSIPFGVKSAVERGLSAVFYTFSRKTSSSTINVSDEAGYAIFHHAALHNRVSVICQLWSANFNVNQRRFIMFSQADSSKVDMKKERNGPTPLHLAAQACSLEATICLLCFKADYTLTEKRGWMPIHFAAFYDNICILIALCRKDPSLLEAEATAENQCTPLLLAATSGALDTIQYLFSLGANWRKTDTKGNNIIHLSVLAFHTEVLKYIIELNIPELPVWETLVEMLQCESSKRRMMAVMSLEVICLANDRYWQCILDAGTIPALVNLLKSPQIKLQYKTVGLLSNISTHVSIVHAIVEAGGIPAVINLLTSDEPELHSRCAIILYDVAKCENKDVIAKYSGIPALINLLSLNKESVLVNVMNCIRVLCMGNESNQQSMKDNNGIQYLIQFLSSDSDVLKALSSATIAEVARDNKEVQDAIAKEGAIPPLVTLFKGKQLSVQVKGAMAVESLANCNPLIQKEFLERELTKDLLKLLQAFQIDVKEQGAIALWALAGQTLKQQKYMAEQIGYNLIISMLLSPSAKMQYVGGEAVIALSKDSRMHQNQICEGKGIAPLVRLLRINKIPEGTLLSVIRAVGSICIGVAHTSNPMSQQFVVEENALPVLIQLLRNHPSINIRVEVAFSLACIVLGNNSLKKELQNDEGFEYSDVLYLLHSKDKEVCLKAGYALTLFAFNDRFQQHLILETGLITVSIFEPFLQSSVETERAMAAFQIIILAKAIIDVEHVTLYGRGIQILADSLNSVHAPTIALTGNIIASLAHSRAGIPEAFVSLGTVQRLCYHLYARSEEVRTACSCALGYLTYNAHAFRLLLTECRNKPNQFLRITNNISKDAKINPAFLKEFQLQQRMGLPSLSLERNGGPPVIPVFKKGKEHRQKTRPKIQPRDSLTLLPPVTNVKELFRTTHKANISHNTFSFPSGVSSDIINVSRPRIAFLNKLGKDEQKANPDPPAFLNKLGKDEQNANPDPAESQ.

Residues Met-313–Leu-329 traverse the membrane as a helical segment. ANK repeat units follow at residues Ala-532–Gln-561, Asn-582–Leu-611, Arg-615–Glu-644, Asn-651–Lys-680, and Lys-684–Val-714. ARM repeat units lie at residues Asp-745 to Thr-784, Val-786 to Lys-825, Glu-827 to Met-865, Glu-868 to Arg-907, Lys-910 to Asn-949, and Pro-1085 to Leu-1125. A disordered region spans residues Lys-1431–Gln-1465.

Its subcellular location is the membrane. This is Ankyrin and armadillo repeat-containing protein (Ankar) from Mus musculus (Mouse).